The following is a 323-amino-acid chain: MEDGPVFYGFKNIFITMFATFFFFKLLIKVFLALLTHFYIVKGNRKEAARIAEEIYGGISDCWADRSPLHEAAAQGRLLALKTLIAQGVNVNLVTINRVSSLHEACLGGHVACAKALLENGAHVNGVTVHGATPLFNACCSGSAACVNVLLEFGAKAQLEVHLASPIHEAVKRGHRECMEILLANNVNIDHEVPQLGTPLYVACTYQRVDCVKKLLELGASVDHGQWLDTPLHAAARQSNVEVIHLLTDYGANLKRRNAQGKSALDLAAPKSSVEQALLLREGPPALSQLCRLCVRKCLGRACHQAIHKLHLPEPLERFLLYQ.

ANK repeat units follow at residues 64–93, 97–126, 130–159, 162–191, 195–224, and 227–256; these read ADRS…NVNL, NRVS…HVNG, HGAT…KAQL, HLAS…NIDH, QLGT…SVDH, and WLDT…NLKR. One can recognise an SOCS box domain in the interval 273–323; it reads SVEQALLLREGPPALSQLCRLCVRKCLGRACHQAIHKLHLPEPLERFLLYQ.

The protein belongs to the ankyrin SOCS box (ASB) family. In terms of assembly, substrate-recognition component of the ECS(ASB11) complex, composed of ASB11, CUL5, ELOB, ELOC and RNF7/RBX2.

Its subcellular location is the endoplasmic reticulum. Its pathway is protein modification; protein ubiquitination. In terms of biological role, substrate-recognition component of a cullin-5-RING E3 ubiquitin-protein ligase complex (ECS complex, also named CRL5 complex), which mediates the ubiquitination and subsequent proteasomal degradation of target proteins, such as BIK, DIRAS2 and RPN1. The ECS(ASB11) complex acts as a regulator of the endoplasmic reticulum unfolded protein response by mediating ubiquitination and degradation of BIK. In Homo sapiens (Human), this protein is Ankyrin repeat and SOCS box protein 11.